Consider the following 262-residue polypeptide: NAC domain-containing protein 71 (262 aa).

The 155-residue stretch at 6–160 folds into the NAC domain; it reads LPPGFRFHPT…AFALCRVVKK (155 aa). A DNA-binding region spans residues 107-166; that stretch reads AGYRKTLVFYEGRAPLGDRTNWFMHEYRLCDIDDHSQKSPNFKGAFALCRVVKKNELKKN.

It is found in the nucleus. Its function is as follows. Transcription factor involved in tissue reunion of wounded inflorescence stems. Required for the division of pith cells in the reunion process, which is dependent on polar-transported auxin and the wound-inducible hormones ethylene and jasmonate. Binds to the promoters of XTH19 and XTH20 to induce their expression via auxin signaling. XTH19 and XTH20 are involved in cell proliferation in the tissue reunion process of incised stems. Involved in hypocotyl graft union formation. Required for the auxin- mediated promotion of vascular tissue proliferation during hypocotyl graft attachment. The chain is NAC domain-containing protein 71 from Arabidopsis thaliana (Mouse-ear cress).